A 301-amino-acid polypeptide reads, in one-letter code: Probable alpha-L-glutamate ligase 1 (301 aa).

An ATP-grasp domain is found at 104 to 287 (LQLLSRKNIG…VAEKIIQFIE (184 aa)). Residues lysine 141, 178–179 (EY), aspartate 187, and 211–213 (RSN) contribute to the ATP site. Aspartate 248, glutamate 260, and asparagine 262 together coordinate Mg(2+). Residues aspartate 248, glutamate 260, and asparagine 262 each coordinate Mn(2+).

Belongs to the RimK family. It depends on Mg(2+) as a cofactor. The cofactor is Mn(2+).

This chain is Probable alpha-L-glutamate ligase 1, found in Shewanella frigidimarina (strain NCIMB 400).